The sequence spans 319 residues: 33 kDa chaperonin (319 aa).

2 disulfides stabilise this stretch: cysteine 239–cysteine 241 and cysteine 272–cysteine 275. The disordered stretch occupies residues 300–319 (EVSEEMKKAEEKEKEEKNKK).

It belongs to the HSP33 family. Post-translationally, under oxidizing conditions two disulfide bonds are formed involving the reactive cysteines. Under reducing conditions zinc is bound to the reactive cysteines and the protein is inactive.

The protein localises to the cytoplasm. Its function is as follows. Redox regulated molecular chaperone. Protects both thermally unfolding and oxidatively damaged proteins from irreversible aggregation. Plays an important role in the bacterial defense system toward oxidative stress. This chain is 33 kDa chaperonin, found in Clostridium perfringens (strain ATCC 13124 / DSM 756 / JCM 1290 / NCIMB 6125 / NCTC 8237 / Type A).